Reading from the N-terminus, the 199-residue chain is Adenylyl-sulfate kinase (199 aa).

Residue 35–42 (GLSGSGKS) coordinates ATP. Residue Ser109 is the Phosphoserine intermediate of the active site.

The protein belongs to the APS kinase family.

The enzyme catalyses adenosine 5'-phosphosulfate + ATP = 3'-phosphoadenylyl sulfate + ADP + H(+). It functions in the pathway sulfur metabolism; hydrogen sulfide biosynthesis; sulfite from sulfate: step 2/3. Its function is as follows. Catalyzes the synthesis of activated sulfate. This is Adenylyl-sulfate kinase from Clostridium kluyveri (strain ATCC 8527 / DSM 555 / NBRC 12016 / NCIMB 10680 / K1).